The sequence spans 161 residues: Nucleotide-binding protein Daci_4781 (161 aa).

This sequence belongs to the YajQ family.

Its function is as follows. Nucleotide-binding protein. The polypeptide is Nucleotide-binding protein Daci_4781 (Delftia acidovorans (strain DSM 14801 / SPH-1)).